The primary structure comprises 411 residues: Pre-mRNA-splicing factor dre4 (411 aa).

The WW 1 domain occupies 3 to 36; it reads QPLPPGWTEHKAPSGIPYYWNAELKKSTYQRPSF. The interval 65–84 is disordered; the sequence is NAEERKNSRDLRKQLPDRPK. Over residues 66–83 the composition is skewed to basic and acidic residues; it reads AEERKNSRDLRKQLPDRP. Residues 89 to 122 form the WW 2 domain; sequence IPNNDSWVVVFTKKNRYFFHNLKSHESYWEPPLE. Positions 138 to 209 are disordered; that stretch reads ISKDSSQSQN…KSHSAEELEF (72 aa). Positions 140-151 are enriched in polar residues; sequence KDSSQSQNVDSG. Over residues 152–166 the composition is skewed to basic and acidic residues; it reads KTNHEEIHESRHLQT. Positions 167-179 are enriched in acidic residues; sequence EIEEPSGLEESSE. The region spanning 239 to 293 is the FF domain; that stretch reads TDDARRVFTELLKDKNIGAYQPWELVYPKLLDDDRFYVLDSGERRKEVFEEYCKS.

Component of the spliceosomal complex. Interacts with prp19.

It is found in the nucleus. Its function is as follows. Component of the spliceosome involved in mRNA processing. In Schizosaccharomyces pombe (strain 972 / ATCC 24843) (Fission yeast), this protein is Pre-mRNA-splicing factor dre4 (dre4).